We begin with the raw amino-acid sequence, 314 residues long: MITCLRNWPLLLKRFSVHQIHQFTQLSGRFERPPQSGKSSRDPYLVTVVQGRSKKPRFPGERSNQRFGEDSWFVSSTPLAEVMGVADGVGGWRDLGVDAGRFAKELMSCCSGQTQLSDFDGRSPRNMLIAGFQELSHREHPVVGSSTACLATMHRKDCTLYTANLGDSGFLVVRNGRVLHRSVEQTHDFNTPYQLTVPPEDRKESYYCDKPEMAVSTRHSLLPGDLVLLATDGLFDNMPESMLLSILNGLKERGEHDLLVGASRVVEKARELSMNASFQSPFAIKARQHNVSYSGGGKPDDITLILSSVEVPNA.

The PPM-type phosphatase domain occupies Pro43 to Val309. Mn(2+) is bound by residues Asp87, Gly88, and Asp232.

Belongs to the PP2C family. Requires Mg(2+) as cofactor. It depends on Mn(2+) as a cofactor.

It catalyses the reaction O-phospho-L-seryl-[protein] + H2O = L-seryl-[protein] + phosphate. The enzyme catalyses O-phospho-L-threonyl-[protein] + H2O = L-threonyl-[protein] + phosphate. The chain is Protein phosphatase PTC7 homolog fig from Drosophila melanogaster (Fruit fly).